The sequence spans 442 residues: Kelch domain-containing protein 10 (442 aa).

Residues 1 to 57 (MSAAQGWDRNRRRGGGAAGAGGGGSGAGGGSGGSGGRGTGQLNRFVQLSGRPHLPGK) form a disordered region. An Omega-N-methylarginine modification is found at R13. Over residues 15–39 (GGAAGAGGGGSGAGGGSGGSGGRGT) the composition is skewed to gly residues. Kelch repeat units lie at residues 87–154 (RPPP…PREL), 155–198 (ASMS…ALLS), 199–260 (CRGK…PEER), 261–319 (YRHE…RRCH), 320–364 (SCVQ…PEPV), and 365–403 (YFHC…LVVP). Residues 401 to 442 (VVPSLLELAWEKLLAAFPNLANLSRTQLLHLGLTQGLIERLK) form an interaction with CUL2 region.

The protein belongs to the KLHDC10 family. In terms of assembly, component of a CRL2 E3 ubiquitin-protein ligase complex, also named ECS (Elongin BC-CUL2/5-SOCS-box protein) complex, composed of CUL2, Elongin BC (ELOB and ELOC), RBX1 and substrate-specific adapter KLHDC10. Interacts (via the 6 Kelch repeats) with PPP5C.

The protein resides in the nucleus. The protein localises to the cytoplasm. The protein operates within protein modification; protein ubiquitination. Substrate-recognition component of a Cul2-RING (CRL2) E3 ubiquitin-protein ligase complex of the DesCEND (destruction via C-end degrons) pathway, which recognizes a C-degron located at the extreme C-terminus of target proteins, leading to their ubiquitination and degradation. The C-degron recognized by the DesCEND pathway is usually a motif of less than ten residues and can be present in full-length proteins, truncated proteins or proteolytically cleaved forms. The CRL2(KLHDC10) complex specifically recognizes proteins with a proline-glycine (Pro-Gly) or an alanine tail (CAT tail) at the C-terminus, leading to their ubiquitination and degradation. The CRL2(KLHDC10) complex is involved in the ribosome-associated quality control (RQC) pathway, which mediates the extraction of incompletely synthesized nascent chains from stalled ribosomes: CRL2(KLHDC10) acts downstream of NEMF and recognizes CAT tails associated with stalled nascent chains, leading to their ubiquitination and degradation. Participates in the oxidative stress-induced cell death through MAP3K5 activation. Inhibits PPP5C phosphatase activity on MAP3K5. Acts as a regulator of necroptosis. This chain is Kelch domain-containing protein 10, found in Homo sapiens (Human).